The primary structure comprises 384 residues: Glucose-1-phosphate adenylyltransferase (384 aa).

Alpha-D-glucose 1-phosphate-binding positions include tyrosine 103, glycine 168, 183–184 (EK), and serine 194.

This sequence belongs to the bacterial/plant glucose-1-phosphate adenylyltransferase family. As to quaternary structure, homotetramer.

It carries out the reaction alpha-D-glucose 1-phosphate + ATP + H(+) = ADP-alpha-D-glucose + diphosphate. Its pathway is glycan biosynthesis; glycogen biosynthesis. Involved in the biosynthesis of ADP-glucose, a building block required for the elongation reactions to produce glycogen. Catalyzes the reaction between ATP and alpha-D-glucose 1-phosphate (G1P) to produce pyrophosphate and ADP-Glc. In Fusobacterium nucleatum subsp. nucleatum (strain ATCC 25586 / DSM 15643 / BCRC 10681 / CIP 101130 / JCM 8532 / KCTC 2640 / LMG 13131 / VPI 4355), this protein is Glucose-1-phosphate adenylyltransferase.